The primary structure comprises 238 residues: MIFDTPLQGGQLIRRYKRFLADITLDSGERITAHCPNTGSMMGCAEPGSRVWVSRSDNPRRKYAYTWELVEVAAGVVVGVHTGRANALVEEALLAGRLPALRGYRRVRREVRVVNRPMRADLLLGDHSEGEPDCLLEVKNVTAAVADGVALFPDAVSARGTRHLDVLAAEARAGRRTALVFCVQRPDVREVHPADAIDRAYGQALRAALADGMEAYALQGGPSPEGIELTRELPVHCP.

This sequence belongs to the SfsA family.

This chain is Sugar fermentation stimulation protein homolog, found in Alkalilimnicola ehrlichii (strain ATCC BAA-1101 / DSM 17681 / MLHE-1).